A 275-amino-acid chain; its full sequence is Activator of basal transcription 1 (275 aa).

N-acetylmethionine is present on M1. Composition is skewed to acidic residues over residues 1-10 (MEVEGLELDT) and 25-34 (AEEEQEESED). A disordered region spans residues 1-39 (MEVEGLELDTAELGPLEGSHQKLEAEEEQEESEDAAGGS). Positions 46–145 (GIVYLGHIPP…RRRSPFRYDL (100 aa)) constitute an RRM domain. Residues 164–194 (AFERQVRRQRLRAEVAQAKRETDFYLRSVER) are a coiled coil. A disordered region spans residues 200 to 275 (AADGDSTRPN…RGNSSPARNS (76 aa)). The span at 262–275 (PSESRGNSSPARNS) shows a compositional bias: polar residues.

It belongs to the ESF2/ABP1 family. In terms of assembly, interacts with ESF1/ABTAP. Interacts with IGHMBP2.

It localises to the nucleus. It is found in the nucleolus. In terms of biological role, could be a novel TATA-binding protein (TBP) which can function as a basal transcription activator. Can act as a regulator of basal transcription for class II genes. This chain is Activator of basal transcription 1 (ABT1), found in Bos taurus (Bovine).